The chain runs to 129 residues: Small ribosomal subunit protein uS13m (129 aa).

The tract at residues 92-129 (HQDGSPLRGQRTHTNARTARKQIRKGNERRLPKEQATD) is disordered. Residues 116–129 (KGNERRLPKEQATD) are compositionally biased toward basic and acidic residues.

This sequence belongs to the universal ribosomal protein uS13 family. In terms of assembly, part of the small ribosomal subunit.

Its subcellular location is the mitochondrion. Functionally, located at the top of the head of the small subunit, it contacts several helices of the 18S rRNA. This chain is Small ribosomal subunit protein uS13m (RPS13), found in Zea mays (Maize).